A 293-amino-acid chain; its full sequence is MPELPEVETVRRGLLPVLQGAVIESAEARRPDLRWPLPEGFAERLTGRRVEAVGRRAKYLLADLDGGEVLIVHLGMSGSIRIEGAQVKGRPAGFYHPRGEPGTHDHVVFHLAGGATVTFNDPRRFGAMLLVPYDQLDSHPLLSSLGPEPLGNTFHADYLAQACAGRRTNLKAALLDQKVVAGLGNIYVSEALHRAGLSPRRMASTLASASGAPNVRTERLVTAIRDVLREAIQAGGSSLKDHRQVNGELGYFQHNFKVYDREGEPCPTLRCKGHVQRIVQAGRSTFFCATCQR.

Pro-2 serves as the catalytic Schiff-base intermediate with DNA. The Proton donor role is filled by Glu-3. The active-site Proton donor; for beta-elimination activity is Lys-58. DNA is bound by residues His-104, Arg-123, and Arg-166. The segment at Lys-257–Arg-293 adopts an FPG-type zinc-finger fold. The Proton donor; for delta-elimination activity role is filled by Arg-283.

This sequence belongs to the FPG family. As to quaternary structure, monomer. The cofactor is Zn(2+).

It catalyses the reaction Hydrolysis of DNA containing ring-opened 7-methylguanine residues, releasing 2,6-diamino-4-hydroxy-5-(N-methyl)formamidopyrimidine.. The catalysed reaction is 2'-deoxyribonucleotide-(2'-deoxyribose 5'-phosphate)-2'-deoxyribonucleotide-DNA = a 3'-end 2'-deoxyribonucleotide-(2,3-dehydro-2,3-deoxyribose 5'-phosphate)-DNA + a 5'-end 5'-phospho-2'-deoxyribonucleoside-DNA + H(+). Involved in base excision repair of DNA damaged by oxidation or by mutagenic agents. Acts as a DNA glycosylase that recognizes and removes damaged bases. Has a preference for oxidized purines, such as 7,8-dihydro-8-oxoguanine (8-oxoG). Has AP (apurinic/apyrimidinic) lyase activity and introduces nicks in the DNA strand. Cleaves the DNA backbone by beta-delta elimination to generate a single-strand break at the site of the removed base with both 3'- and 5'-phosphates. The sequence is that of Formamidopyrimidine-DNA glycosylase from Azorhizobium caulinodans (strain ATCC 43989 / DSM 5975 / JCM 20966 / LMG 6465 / NBRC 14845 / NCIMB 13405 / ORS 571).